The sequence spans 120 residues: Large ribosomal subunit protein uL18 (120 aa).

The segment at 1 to 26 (MSKAKVTNARRKRSVRLKLRRSGGGR) is disordered. Positions 8–23 (NARRKRSVRLKLRRSG) are enriched in basic residues.

The protein belongs to the universal ribosomal protein uL18 family. As to quaternary structure, part of the 50S ribosomal subunit; part of the 5S rRNA/L5/L18/L25 subcomplex. Contacts the 5S and 23S rRNAs.

Functionally, this is one of the proteins that bind and probably mediate the attachment of the 5S RNA into the large ribosomal subunit, where it forms part of the central protuberance. This chain is Large ribosomal subunit protein uL18, found in Bradyrhizobium diazoefficiens (strain JCM 10833 / BCRC 13528 / IAM 13628 / NBRC 14792 / USDA 110).